Reading from the N-terminus, the 160-residue chain is tRNA (cytidine(34)-2'-O)-methyltransferase (160 aa).

Residues Leu78, Gly100, Ile120, and Ser128 each contribute to the S-adenosyl-L-methionine site.

Belongs to the class IV-like SAM-binding methyltransferase superfamily. RNA methyltransferase TrmH family. TrmL subfamily. As to quaternary structure, homodimer.

The protein localises to the cytoplasm. The catalysed reaction is cytidine(34) in tRNA + S-adenosyl-L-methionine = 2'-O-methylcytidine(34) in tRNA + S-adenosyl-L-homocysteine + H(+). The enzyme catalyses 5-carboxymethylaminomethyluridine(34) in tRNA(Leu) + S-adenosyl-L-methionine = 5-carboxymethylaminomethyl-2'-O-methyluridine(34) in tRNA(Leu) + S-adenosyl-L-homocysteine + H(+). Functionally, methylates the ribose at the nucleotide 34 wobble position in the two leucyl isoacceptors tRNA(Leu)(CmAA) and tRNA(Leu)(cmnm5UmAA). Catalyzes the methyl transfer from S-adenosyl-L-methionine to the 2'-OH of the wobble nucleotide. The sequence is that of tRNA (cytidine(34)-2'-O)-methyltransferase from Beijerinckia indica subsp. indica (strain ATCC 9039 / DSM 1715 / NCIMB 8712).